We begin with the raw amino-acid sequence, 477 residues long: UDP-N-acetylmuramate--L-alanine ligase (477 aa).

117–123 (GTHGKTT) provides a ligand contact to ATP.

This sequence belongs to the MurCDEF family.

Its subcellular location is the cytoplasm. It carries out the reaction UDP-N-acetyl-alpha-D-muramate + L-alanine + ATP = UDP-N-acetyl-alpha-D-muramoyl-L-alanine + ADP + phosphate + H(+). Its pathway is cell wall biogenesis; peptidoglycan biosynthesis. Its function is as follows. Cell wall formation. The sequence is that of UDP-N-acetylmuramate--L-alanine ligase from Phenylobacterium zucineum (strain HLK1).